A 520-amino-acid polypeptide reads, in one-letter code: Developmental regulatory protein wetA (520 aa).

Disordered stretches follow at residues 110 to 149 (ATHA…NERR), 260 to 294 (HPSS…SWQS), 388 to 453 (TTSQ…GSNK), and 471 to 496 (LTGV…RRRK). The segment covering 261–294 (PSSSTLTNSSPSSADDMFSSSHSSDPHSLSSWQS) has biased composition (low complexity). Residues 388-401 (TTSQVHNVSRSPSL) are compositionally biased toward polar residues. The span at 420-429 (PVHRRTHSRK) shows a compositional bias: basic residues. The span at 436–453 (NAPKPAKASGSSSRGSNK) shows a compositional bias: low complexity.

The protein belongs to the wetA family.

Functionally, brlA, abaA and wetA are pivotal regulators of conidiophore development and conidium maturation. They act individually and together to regulate their own expression and that of numerous other sporulation-specific genes. Plays a crucial role in pigmentation and conidial cell wall integrity. This chain is Developmental regulatory protein wetA, found in Penicillium digitatum (strain PHI26 / CECT 20796) (Green mold).